A 464-amino-acid polypeptide reads, in one-letter code: L-cystine uptake protein TcyP (464 aa).

10 helical membrane passes run 3–23, 34–54, 73–93, 107–127, 184–204, 225–245, 263–283, 347–367, 371–391, and 395–415; these read TLLV…LYYM, VFTA…IYEP, YVKL…ISAF, GLII…GIAA, PTST…FIGV, IVMR…LALM, FVLA…LLIA, AGIY…IDPL, FILT…GVGG, and FAAL…ALVI.

This sequence belongs to the dicarboxylate/amino acid:cation symporter (DAACS) (TC 2.A.23) family.

It is found in the membrane. Functionally, mediates uptake of L-cystine, the oxidized form of L-cysteine. This chain is L-cystine uptake protein TcyP, found in Bacillus thuringiensis subsp. konkukian (strain 97-27).